The sequence spans 144 residues: Maximins 8/H7 (144 aa).

An N-terminal signal peptide occupies residues 1 to 18 (MKFKYIVAVSFLIASAYA). Positions 19 to 43 (RSEENDEQSLSQRDVLEEESLREIR) are excised as a propeptide. Asparagine 70 carries the asparagine amide modification. A propeptide spanning residues 74 to 123 (TAEDHEVMKRLEAVMRDLDSLDYPEEASERETRGFNQEEIANLFTKKEKR) is cleaved from the precursor. At leucine 143 the chain carries Leucine amide.

It belongs to the bombinin family. Expressed by the skin glands.

The protein resides in the secreted. In terms of biological role, maximin-8 shows antimicrobial activity against bacteria and against the fungus C.albicans. It has little hemolytic activity. Its function is as follows. Maximin-H7 shows antimicrobial activity against bacteria and against the fungus C.albicans. Shows strong hemolytic activity. This is Maximins 8/H7 from Bombina maxima (Giant fire-bellied toad).